The sequence spans 533 residues: Probable G-protein coupled receptor Mth-like 14 (533 aa).

The N-terminal stretch at 1 to 23 (MNLGHWNFLLALISLQTFFNASA) is a signal peptide. N20, N29, N30, N36, and N47 each carry an N-linked (GlcNAc...) asparagine glycan. The Extracellular portion of the chain corresponds to 24 to 242 (QISTVNNSSK…QVEEQIAFAK (219 aa)). The interval 86 to 108 (VQSPVDNPLDPADCSQREKYRKQ) is disordered. C120 and C216 are oxidised to a cystine. Residues N133, N178, and N206 are each glycosylated (N-linked (GlcNAc...) asparagine). A helical membrane pass occupies residues 243–263 (VVFVAVLMLISMPCLLLVSYL). Topologically, residues 264-279 (HMTLRLLRNLHGLSLS) are cytoplasmic. Residues 280–300 (LMSLCLASGYFVHSVVHIYGI) traverse the membrane as a helical segment. At 301 to 303 (PNQ) the chain is on the extracellular side. The chain crosses the membrane as a helical span at residues 304–324 (GFIGYVIQFCILSYFFWYLCI). Topologically, residues 325 to 347 (CFNVLLNVWYKLPCCIQCSKSWA) are cytoplasmic. The helical transmembrane segment at 348–368 (TFNFACYAVFAFSGPATIVAL) threads the bilayer. Over 369–395 (TVQKGLPGMPSYFLQGLTESIRDSQRY) the chain is Extracellular. Residues 396 to 416 (FIPPVSTILFLSFLLNIISFF) form a helical membrane-spanning segment. The Cytoplasmic portion of the chain corresponds to 417 to 451 (GFQRISGYAKAEKNIQERKCLFDQQKYEDVKKDAK). Residues 452–472 (CVSLLGIIMVVSWLLEIITFY) traverse the membrane as a helical segment. The Extracellular segment spans residues 473–480 (SGSNSNYL). The helical transmembrane segment at 481-501 (ILCDMVNGLQGVWVLLIFLVV) threads the bilayer. The Cytoplasmic portion of the chain corresponds to 502 to 533 (RRRRTIILRWWYDRGSHEIEGTELQALSNSPT).

The protein belongs to the G-protein coupled receptor 2 family. Mth subfamily.

Its subcellular location is the cell membrane. This Drosophila melanogaster (Fruit fly) protein is Probable G-protein coupled receptor Mth-like 14 (mthl14).